The sequence spans 220 residues: MIKWLARPADYGSVWDAMKAFTAARGPGTADEIWLCEHAPVYTLGQAGRPEHLLNPGLIPVVHCDRGGQVTYHGPGQVLAYTLFDLRRAGLYVREYVDMLEQATLATLRELGLEQACRKPGAPGIYVPQPGGELAKIAALGVKVRNGYAYHGLALNIDMDLSPFLGINPCGYEGLRTVDLAACGVRTSVERAGELLAAQLARAHGQAVQQRAAALAGVPG.

One can recognise a BPL/LPL catalytic domain in the interval 27–208; it reads PGTADEIWLC…QLARAHGQAV (182 aa). Residues 66–73, 139–141, and 152–154 contribute to the substrate site; these read RGGQVTYH, ALG, and GLA. The active-site Acyl-thioester intermediate is the cysteine 170.

It belongs to the LipB family.

The protein resides in the cytoplasm. It catalyses the reaction octanoyl-[ACP] + L-lysyl-[protein] = N(6)-octanoyl-L-lysyl-[protein] + holo-[ACP] + H(+). It participates in protein modification; protein lipoylation via endogenous pathway; protein N(6)-(lipoyl)lysine from octanoyl-[acyl-carrier-protein]: step 1/2. Its function is as follows. Catalyzes the transfer of endogenously produced octanoic acid from octanoyl-acyl-carrier-protein onto the lipoyl domains of lipoate-dependent enzymes. Lipoyl-ACP can also act as a substrate although octanoyl-ACP is likely to be the physiological substrate. This chain is Octanoyltransferase, found in Bordetella bronchiseptica (strain ATCC BAA-588 / NCTC 13252 / RB50) (Alcaligenes bronchisepticus).